The following is a 253-amino-acid chain: ATP synthase subunit b 2 (253 aa).

The chain crosses the membrane as a helical span at residues 9–27; the sequence is VLEIVNFLVLVWLLKRFLY.

The protein belongs to the ATPase B chain family. In terms of assembly, F-type ATPases have 2 components, F(1) - the catalytic core - and F(0) - the membrane proton channel. F(1) has five subunits: alpha(3), beta(3), gamma(1), delta(1), epsilon(1). F(0) has three main subunits: a(1), b(2) and c(10-14). The alpha and beta chains form an alternating ring which encloses part of the gamma chain. F(1) is attached to F(0) by a central stalk formed by the gamma and epsilon chains, while a peripheral stalk is formed by the delta and b chains.

Its subcellular location is the cell inner membrane. Its function is as follows. F(1)F(0) ATP synthase produces ATP from ADP in the presence of a proton or sodium gradient. F-type ATPases consist of two structural domains, F(1) containing the extramembraneous catalytic core and F(0) containing the membrane proton channel, linked together by a central stalk and a peripheral stalk. During catalysis, ATP synthesis in the catalytic domain of F(1) is coupled via a rotary mechanism of the central stalk subunits to proton translocation. In terms of biological role, component of the F(0) channel, it forms part of the peripheral stalk, linking F(1) to F(0). The sequence is that of ATP synthase subunit b 2 from Methylococcus capsulatus (strain ATCC 33009 / NCIMB 11132 / Bath).